Reading from the N-terminus, the 304-residue chain is uncharacterized protein (304 aa).

An N-terminal signal peptide occupies residues 1–22; sequence MKKSLTLLILLLCSLLFSTVLS. Residues 91 to 111 form a disordered region; it reads PAPAPTPESSDPDEPMKPDDS. N133, N160, N183, and N233 each carry an N-linked (GlcNAc...) asparagine glycan. A lipid anchor (GPI-anchor amidated serine) is attached at S282. A propeptide spans 283-304 (removed in mature form); the sequence is SSHLFGVLPFLPLVLCIFLFLL.

The protein resides in the cell membrane. This is an uncharacterized protein from Arabidopsis thaliana (Mouse-ear cress).